Here is a 172-residue protein sequence, read N- to C-terminus: Endoribonuclease YbeY (172 aa).

3 residues coordinate Zn(2+): His134, His138, and His144.

Belongs to the endoribonuclease YbeY family. It depends on Zn(2+) as a cofactor.

It is found in the cytoplasm. Single strand-specific metallo-endoribonuclease involved in late-stage 70S ribosome quality control and in maturation of the 3' terminus of the 16S rRNA. This is Endoribonuclease YbeY from Burkholderia cenocepacia (strain HI2424).